Here is an 853-residue protein sequence, read N- to C-terminus: MATAEVGGGGGEGDAAAAAVARAGGGGGGGGGGGEDALFTELWSACAGPLVTVPRVGEKVFYFPQGHIEQVEASTNQVGEQRMQLYNLPWKILCEVMNVELKAEPDTDEVYAQLTLLPELKQQEDNGSTEEEVPSAPAAGHVRPRVHSFCKTLTASDTSTHGGFSVLRRHADECLPPLDMSRQPPTQELVAKDLHGVEWRFRHIFRGQPRRHLLQSGWSVFVSAKRLVAGDAFIFLRGENGELRVGVRRAMRQQTNVPSSVISSHSMHLGVLATAWHAVNTGTMFTVYYKPRTSPAEFVVPYDRYMESLKRNYSIGMRFKMRFEGEEAPEQRFTGTIVGMGDSDPAGWPESKWRSLKVRWDEASSIPRPERVSPWQIEPAVSPPPVNPLPVPRTKRLRPNATALPADSSAIAKEAATKVVVESEPNGTQRTFQTQENATPKSGFGNSSELESAQKSIMRPSGFDREKNNTPIQWKLGSDGWMQMSKPESYSEMLSGFQPPKDVQTPQGFCSLPEQITAGHSNFWHTVNAQYQDQQSNHNMFPSSWSFMPPNTRLGLNKQNYSMIQEAGVLSQRPGNTKFGNGVYAALPGRGTEQYSGGWFGHMMPNSHMDDTQPRLIKPKPLVVAHGDVQKAKGASCKLFGIHLDSPAKSEPLKSPSSVVYDGTPQTPGATEWRRPDVTEVEKCSDPSKAMKPLDTPQPDSVPEKPSSQQASRNMSCKSQGVSTRSCKKVHKQGIALGRSVDLTKFNGYEELIAELDDMFDFNGELKGPKKEWMVVYTDNEGDMMLVGDDPWIEFCDMVHKIFIYTREEVQRMNPGTLNSRSEDSHANSMERGSVGREMRGCLSTSSLNSENC.

Residues 121–141 form a disordered region; it reads KQQEDNGSTEEEVPSAPAAGH. Positions 149 to 251 form a DNA-binding region, TF-B3; sequence FCKTLTASDT…ELRVGVRRAM (103 aa). 2 disordered regions span residues 422–471 and 647–723; these read ESEP…NNTP and PAKS…QGVS. Positions 425 to 455 are enriched in polar residues; the sequence is PNGTQRTFQTQENATPKSGFGNSSELESAQK. Residues 672-686 show a composition bias toward basic and acidic residues; that stretch reads EWRRPDVTEVEKCSD. Residues 706–723 show a composition bias toward polar residues; the sequence is PSSQQASRNMSCKSQGVS. One can recognise a PB1 domain in the interval 725–809; it reads RSCKKVHKQG…HKIFIYTREE (85 aa). The segment at 815–853 is disordered; that stretch reads PGTLNSRSEDSHANSMERGSVGREMRGCLSTSSLNSENC. Residues 843-853 show a composition bias toward polar residues; sequence LSTSSLNSENC.

This sequence belongs to the ARF family. As to quaternary structure, homodimers and heterodimers.

It is found in the nucleus. In terms of biological role, auxin response factors (ARFs) are transcriptional factors that bind specifically to the DNA sequence 5'-TGTCTC-3' found in the auxin-responsive promoter elements (AuxREs). In Oryza sativa subsp. indica (Rice), this protein is Auxin response factor 23 (ARF23).